Here is a 129-residue protein sequence, read N- to C-terminus: Small ribosomal subunit protein eS6 (129 aa).

Belongs to the eukaryotic ribosomal protein eS6 family.

The sequence is that of Small ribosomal subunit protein eS6 from Archaeoglobus fulgidus (strain ATCC 49558 / DSM 4304 / JCM 9628 / NBRC 100126 / VC-16).